A 562-amino-acid chain; its full sequence is uncharacterized protein (562 aa).

A run of 5 helical transmembrane segments spans residues 10-27 (IYPEIAVFLSLAIGYWVG), 34-53 (FSLGAVTATLLAAVVIGQFD), 63-85 (IFFLMFLFAVGYGIGPQFVQGIA), 92-114 (ALFAVVACLFSLLFPILCAKIAG), and 155-177 (FSVIPVAYAVTYIFGTVGSAIVL). 2 RCK C-terminal domains span residues 204–288 (TENA…HPDS) and 290–377 (DETQ…QLGV). Transmembrane regions (helical) follow at residues 387-404 (VAFWAFAIVIGALLGSLV), 408-430 (GNLPLTLSTAGGVLIAGLIFSWV), 443-465 (PTVWFMNSVGLNVFIAAIGISAG), 475-497 (LGFSLFLWGVVATTLPLFFAALV), 504-526 (FHPAILLGCCAGARTTTASLGMI), and 539-561 (YTITYAVGNTLLTMWGLVLILIL).

It belongs to the AAE transporter (TC 2.A.81) family.

The protein localises to the cell membrane. This is an uncharacterized protein from Shewanella oneidensis (strain ATCC 700550 / JCM 31522 / CIP 106686 / LMG 19005 / NCIMB 14063 / MR-1).